The following is an 810-amino-acid chain: Probable dehydratase YbiW (810 aa).

The PFL domain maps to 11 to 682 (DRIKAHKNAL…QTMATPDGRK (672 aa)). The disordered stretch occupies residues 677-699 (TPDGRKAHTPLAEGASPASGTDH). The Glycine radical domain occupies 689-810 (EGASPASGTD…DIIARTEHML (122 aa)). At G786 the chain carries Glycine radical.

Belongs to the glycyl radical enzyme (GRE) family.

Its function is as follows. Probably shows dehydratase activity. The sequence is that of Probable dehydratase YbiW (ybiW) from Escherichia coli (strain K12).